A 166-amino-acid polypeptide reads, in one-letter code: Small ribosomal subunit protein uS5 (166 aa).

In terms of domain architecture, S5 DRBM spans 11-74 (LQEKLIAVNR…EKARRNMINV (64 aa)).

It belongs to the universal ribosomal protein uS5 family. In terms of assembly, part of the 30S ribosomal subunit. Contacts proteins S4 and S8.

Functionally, with S4 and S12 plays an important role in translational accuracy. Located at the back of the 30S subunit body where it stabilizes the conformation of the head with respect to the body. This is Small ribosomal subunit protein uS5 from Actinobacillus pleuropneumoniae serotype 5b (strain L20).